The chain runs to 117 residues: Large ribosomal subunit protein bL20c (117 aa).

This sequence belongs to the bacterial ribosomal protein bL20 family.

Its subcellular location is the plastid. The protein localises to the chloroplast. Functionally, binds directly to 23S ribosomal RNA and is necessary for the in vitro assembly process of the 50S ribosomal subunit. It is not involved in the protein synthesizing functions of that subunit. This is Large ribosomal subunit protein bL20c from Ceratophyllum demersum (Rigid hornwort).